We begin with the raw amino-acid sequence, 597 residues long: Pentatricopeptide repeat-containing protein At2g21090 (597 aa).

PPR repeat units lie at residues 45–79 (PFDLLASLLQQCGDTKSLKQGKWIHRHLKITGFKR), 81–111 (NTLLSNHLIGMYMKCGKPIDACKVFDQMHLR), 112–142 (NLYSWNNMVSGYVKSGMLVRARVVFDSMPER), 143–177 (DVVSWNTMVIGYAQDGNLHEALWFYKEFRRSGIKF), 178–212 (NEFSFAGLLTACVKSRQLQLNRQAHGQVLVAGFLS), 213–243 (NVVLSCSIIDAYAKCGQMESAKRCFDEMTVK), 244–274 (DIHIWTTLISGYAKLGDMEAAEKLFCEMPEK), 275–309 (NPVSWTALIAGYVRQGSGNRALDLFRKMIALGVKP), 310–344 (EQFTFSSCLCASASIASLRHGKEIHGYMIRTNVRP), 345–375 (NAIVISSLIDMYSKSGSLEASERVFRICDDK), 377–411 (DCVFWNTMISALAQHGLGHKALRMLDDMIKFRVQP), 412–447 (NRTTLVVILNACSHSGLVEEGLRWFESMTVQHGIVP), and 448–478 (DQEHYACLIDLLGRAGCFKELMRKIEEMPFE). The type E motif stretch occupies residues 483–558 (IWNAILGVCR…EKAVSWIEIE (76 aa)). Residues 559–591 (KKVEAFTVSDGSHAHARKEEIYFILHNLAAVIE) are type E(+) motif.

The protein belongs to the PPR family. PCMP-E subfamily.

In Arabidopsis thaliana (Mouse-ear cress), this protein is Pentatricopeptide repeat-containing protein At2g21090 (PCMP-E48).